Here is a 726-residue protein sequence, read N- to C-terminus: Delta-1-pyrroline-5-carboxylate synthase B (726 aa).

Positions 1–296 are glutamate 5-kinase; it reads MTEIDRSRAF…WAPVVDTTSR (296 aa). 3 residues coordinate substrate: Ser-60, Asp-157, and Asn-176. Residues 196-197 and 236-242 each bind ATP; these read SD and RGGMTAK. Residues 297–717 are gamma-glutamyl phosphate reductase; that stretch reads DMAVAARESS…YTHKDLPVLQ (421 aa).

It in the N-terminal section; belongs to the glutamate 5-kinase family. The protein in the C-terminal section; belongs to the gamma-glutamyl phosphate reductase family.

The enzyme catalyses L-glutamate + ATP = L-glutamyl 5-phosphate + ADP. It catalyses the reaction L-glutamate 5-semialdehyde + phosphate + NADP(+) = L-glutamyl 5-phosphate + NADPH + H(+). The protein operates within amino-acid biosynthesis; L-proline biosynthesis; L-glutamate 5-semialdehyde from L-glutamate: step 1/2. It functions in the pathway amino-acid biosynthesis; L-proline biosynthesis; L-glutamate 5-semialdehyde from L-glutamate: step 2/2. Its function is as follows. P5CS plays a key role in proline biosynthesis, leading to osmoregulation in plants. This is Delta-1-pyrroline-5-carboxylate synthase B (P5CSB) from Arabidopsis thaliana (Mouse-ear cress).